The following is a 103-amino-acid chain: Salivary thrombin inhibitor anophelin (103 aa).

Residues 1-21 (MASKLFVLAFLCLALVVVVQS) form the signal peptide. The segment at 24 to 103 (QYARGDVPTY…PAASSSESDE (80 aa)) is disordered. Residues 56–68 (EEFDPSLLEEHAD) form a blocks exosite I of host thrombin region. Positions 74 to 77 (DPGR) are blocks active site cleft of host thrombin in a reverse direction compared to substrates. Positions 91–103 (ASAPAASSSESDE) are enriched in low complexity.

This sequence belongs to the anophelin family. In terms of assembly, interacts with human F2 (thrombin); the interaction results in thrombin inhibition. In terms of tissue distribution, female salivary gland (at protein level). Not detected in female midgut, head, carcass and male tissues (at protein level).

It localises to the secreted. Increasing concentration of NaCl decreases affinity for thrombin. Its function is as follows. Salivary protein with anticoagulant activity that inhibits host thrombin (F2); binds to the proteinase in a reverse orientation (opposite to substrates). This Anopheles gambiae (African malaria mosquito) protein is Salivary thrombin inhibitor anophelin.